The primary structure comprises 187 residues: Prepronociceptin (187 aa).

The signal sequence occupies residues 1–19; the sequence is MKILFCDVLLLSLLSSVFS. Positions 20–95 are excised as a propeptide; it reads SCPRDCLTCQ…QPKASEMQHL (76 aa). 3 repeat units span residues 109 to 114, 115 to 120, and 121 to 126. The interval 109–126 is 3 X 6 AA tandem repeats of D-A-E-P-G-A; it reads DAEPGADAEPGADAEPGA. The tract at residues 109–133 is disordered; sequence DAEPGADAEPGADAEPGADDAEEVE. The span at 112–131 shows a compositional bias: acidic residues; it reads PGADAEPGADAEPGADDAEE. Positions 180–187 are excised as a propeptide; sequence TLHQNGNV.

The protein belongs to the opioid neuropeptide precursor family. In terms of processing, specific enzymatic cleavages at paired basic residues probably yield other active peptides besides nociceptin. Post-translationally, the N-terminal domain contains 6 conserved cysteines thought to be involved in disulfide bonding and/or processing. Brain and spinal cord. Low levels in kidney and spleen.

Its subcellular location is the secreted. Its function is as follows. Ligand of the opioid receptor-like receptor OPRL1. It may act as a transmitter in the brain by modulating nociceptive and locomotor behavior. May be involved in neuronal differentiation and development. When administered intracerebroventricularly, nociceptin induces hyperalgesia and decreases locomotor activity. Functionally, blocks nociceptin action in pain transmission by inhibiting nociceptin-induced hyperalgesia and allodynia. In terms of biological role, has potent analgesic activity. This Mus musculus (Mouse) protein is Prepronociceptin (Pnoc).